Here is a 620-residue protein sequence, read N- to C-terminus: 1-deoxy-D-xylulose-5-phosphate synthase (620 aa).

Residues H80 and 121 to 123 (GHS) each bind thiamine diphosphate. Residue D152 participates in Mg(2+) binding. Thiamine diphosphate is bound by residues 153–154 (GA), N181, Y288, and E370. A Mg(2+)-binding site is contributed by N181.

It belongs to the transketolase family. DXPS subfamily. As to quaternary structure, homodimer. It depends on Mg(2+) as a cofactor. Requires thiamine diphosphate as cofactor.

It carries out the reaction D-glyceraldehyde 3-phosphate + pyruvate + H(+) = 1-deoxy-D-xylulose 5-phosphate + CO2. Its pathway is metabolic intermediate biosynthesis; 1-deoxy-D-xylulose 5-phosphate biosynthesis; 1-deoxy-D-xylulose 5-phosphate from D-glyceraldehyde 3-phosphate and pyruvate: step 1/1. Its function is as follows. Catalyzes the acyloin condensation reaction between C atoms 2 and 3 of pyruvate and glyceraldehyde 3-phosphate to yield 1-deoxy-D-xylulose-5-phosphate (DXP). The chain is 1-deoxy-D-xylulose-5-phosphate synthase from Escherichia coli O7:K1 (strain IAI39 / ExPEC).